Consider the following 139-residue polypeptide: Phosphoribosyl-AMP cyclohydrolase (139 aa).

Position 91 (D91) interacts with Mg(2+). Position 92 (C92) interacts with Zn(2+). 2 residues coordinate Mg(2+): D93 and D95. Zn(2+) contacts are provided by C110 and C117.

This sequence belongs to the PRA-CH family. As to quaternary structure, homodimer. It depends on Mg(2+) as a cofactor. The cofactor is Zn(2+).

It is found in the cytoplasm. It carries out the reaction 1-(5-phospho-beta-D-ribosyl)-5'-AMP + H2O = 1-(5-phospho-beta-D-ribosyl)-5-[(5-phospho-beta-D-ribosylamino)methylideneamino]imidazole-4-carboxamide. It functions in the pathway amino-acid biosynthesis; L-histidine biosynthesis; L-histidine from 5-phospho-alpha-D-ribose 1-diphosphate: step 3/9. Catalyzes the hydrolysis of the adenine ring of phosphoribosyl-AMP. The chain is Phosphoribosyl-AMP cyclohydrolase from Brucella canis (strain ATCC 23365 / NCTC 10854 / RM-666).